We begin with the raw amino-acid sequence, 537 residues long: 6-phosphogluconate dehydrogenase, decarboxylating 2, chloroplastic (537 aa).

A chloroplast-targeting transit peptide spans Met-1 to Ser-44. Residues Gly-55–Gly-60, Asn-78–Thr-80, Val-122–Ala-124, and Asn-150 contribute to the NADP(+) site. Substrate-binding positions include Asn-150 and Ser-176 to Gly-178. The Proton acceptor role is filled by Lys-230. His-233–Asn-234 is a binding site for substrate. Residue Glu-237 is the Proton donor of the active site. Positions 238, 308, 335, 500, and 506 each coordinate substrate.

This sequence belongs to the 6-phosphogluconate dehydrogenase family. In terms of assembly, homodimer.

It localises to the plastid. The protein localises to the chloroplast. The catalysed reaction is 6-phospho-D-gluconate + NADP(+) = D-ribulose 5-phosphate + CO2 + NADPH. It functions in the pathway carbohydrate degradation; pentose phosphate pathway; D-ribulose 5-phosphate from D-glucose 6-phosphate (oxidative stage): step 3/3. In terms of biological role, catalyzes the oxidative decarboxylation of 6-phosphogluconate to ribulose 5-phosphate and CO(2), with concomitant reduction of NADP to NADPH. The sequence is that of 6-phosphogluconate dehydrogenase, decarboxylating 2, chloroplastic from Spinacia oleracea (Spinach).